We begin with the raw amino-acid sequence, 397 residues long: Phosphoglycerate kinase (397 aa).

Substrate-binding positions include 21–23 (DFN), R36, 59–62 (HCGR), R118, and R151. Residues K201, E323, and 353-356 (GGDT) contribute to the ATP site.

This sequence belongs to the phosphoglycerate kinase family. Monomer.

It localises to the cytoplasm. It catalyses the reaction (2R)-3-phosphoglycerate + ATP = (2R)-3-phospho-glyceroyl phosphate + ADP. It functions in the pathway carbohydrate degradation; glycolysis; pyruvate from D-glyceraldehyde 3-phosphate: step 2/5. This chain is Phosphoglycerate kinase, found in Bartonella quintana (strain Toulouse) (Rochalimaea quintana).